Here is a 211-residue protein sequence, read N- to C-terminus: Prolactin-1 (211 aa).

Residues 1 to 23 (MARRSQGTKLHLAVLCLVVSCHA) form the signal peptide. 2 cysteine pairs are disulfide-bonded: Cys69–Cys184 and Cys201–Cys211.

Belongs to the somatotropin/prolactin family.

The protein resides in the secreted. This chain is Prolactin-1 (prl1), found in Oncorhynchus keta (Chum salmon).